The sequence spans 370 residues: Phenylalanine dehydrogenase (370 aa).

R44 contacts NAD(+). K68 provides a ligand contact to L-phenylalanine. K80 serves as the catalytic Proton donor/acceptor. Residue 114–115 (TD) participates in L-phenylalanine binding. NAD(+) contacts are provided by residues D115, S146, T150, 180 to 186 (GLGKVGF), 203 to 204 (DV), 243 to 244 (AI), and 264 to 266 (AAN). L-phenylalanine is bound at residue N266.

This sequence belongs to the Glu/Leu/Phe/Val dehydrogenases family.

It catalyses the reaction L-phenylalanine + NAD(+) + H2O = 3-phenylpyruvate + NH4(+) + NADH + H(+). It participates in amino-acid biosynthesis; L-phenylalanine biosynthesis; L-phenylalanine from phenylpyruvate (PDH route): step 1/1. Its function is as follows. Catalyzes the reversible NAD(+)-dependent oxidative deamination of L-phenylalanine to phenylpyruvate. The sequence is that of Phenylalanine dehydrogenase from Caldalkalibacillus thermarum (strain TA2.A1).